The primary structure comprises 148 residues: Gastrin-releasing peptide (148 aa).

A signal peptide spans 1 to 23 (MRGRELPLVLLALVLCLAPRGRA). M50 is subject to Methionine amide. Positions 54–148 (STGESSSVSE…EGRNPQLNQQ (95 aa)) are excised as a propeptide. The tract at residues 89–148 (EAKENRNHQPPQPKALGNQQPSWDSEDSSNFKDVGSKGKVGRLSAPGSQREGRNPQLNQQ) is disordered.

This sequence belongs to the bombesin/neuromedin-B/ranatensin family.

The protein resides in the secreted. Its subcellular location is the cytoplasmic vesicle. The protein localises to the secretory vesicle lumen. It is found in the cell projection. It localises to the neuron projection. In terms of biological role, stimulates the release of gastrin and other gastrointestinal hormones. Contributes to the perception of prurient stimuli and to the transmission of itch signals in the spinal cord that promote scratching behavior. Contributes primarily to nonhistaminergic itch sensation. In one study, shown to act in the amygdala as part of an inhibitory network which inhibits memory specifically related to learned fear. In another study, shown to act on vasoactive intestinal peptide (VIP)-expressing cells in the auditory cortex, most likely via extrasynaptic diffusion from local and long-range sources, to mediate disinhibition of glutamatergic cells via VIP cell-specific GRPR signaling which leads to enhanced auditory fear memories. Contributes to the regulation of food intake. Inhibits voltage-gated sodium channels but enhances voltage-gated potassium channels in hippocampal neurons. Induces sighing by acting directly on the pre-Botzinger complex, a cluster of several thousand neurons in the ventrolateral medulla responsible for inspiration during respiratory activity. Functionally, induces an itch response through activation of receptors present on mast cells, triggering mast cell degranulation. This Homo sapiens (Human) protein is Gastrin-releasing peptide (GRP).